The sequence spans 289 residues: ATP synthase gamma chain (289 aa).

It belongs to the ATPase gamma chain family. As to quaternary structure, F-type ATPases have 2 components, CF(1) - the catalytic core - and CF(0) - the membrane proton channel. CF(1) has five subunits: alpha(3), beta(3), gamma(1), delta(1), epsilon(1). CF(0) has three main subunits: a, b and c.

The protein localises to the cell inner membrane. Produces ATP from ADP in the presence of a proton gradient across the membrane. The gamma chain is believed to be important in regulating ATPase activity and the flow of protons through the CF(0) complex. The protein is ATP synthase gamma chain of Leptospira biflexa serovar Patoc (strain Patoc 1 / ATCC 23582 / Paris).